We begin with the raw amino-acid sequence, 154 residues long: MPEFTHINGDKVQMVDITAKGEVKRMARAEGTITLRSDTVAAIRTGTVLKGNVLATARIAATLAVKQTPQLIPLCHQIPIGAITVDFTDTEVSITAEVTVTSYGRTGVEMEALTGVSVALLTIWDMVKSAEKDENGQYPVTGISDIRVIEKIKG.

Substrate contacts are provided by residues 74–76 and 110–111; these read LCH and ME. The active site involves D125.

The protein belongs to the MoaC family. As to quaternary structure, homohexamer; trimer of dimers.

It carries out the reaction (8S)-3',8-cyclo-7,8-dihydroguanosine 5'-triphosphate = cyclic pyranopterin phosphate + diphosphate. It participates in cofactor biosynthesis; molybdopterin biosynthesis. In terms of biological role, catalyzes the conversion of (8S)-3',8-cyclo-7,8-dihydroguanosine 5'-triphosphate to cyclic pyranopterin monophosphate (cPMP). This Methanosphaerula palustris (strain ATCC BAA-1556 / DSM 19958 / E1-9c) protein is Probable cyclic pyranopterin monophosphate synthase.